The sequence spans 114 residues: Flagellar hook-basal body complex protein FliE (114 aa).

This sequence belongs to the FliE family.

Its subcellular location is the bacterial flagellum basal body. The protein is Flagellar hook-basal body complex protein FliE of Burkholderia vietnamiensis (strain G4 / LMG 22486) (Burkholderia cepacia (strain R1808)).